The primary structure comprises 146 residues: Large ribosomal subunit protein uL15 (146 aa).

The span at 1-10 (MRLNQLSPSA) shows a compositional bias: polar residues. The interval 1-54 (MRLNQLSPSAGSRPDAKRAGRGAGSGLGKTAGRGHKGQHSRSGGFHKVGFEGGQ) is disordered. Positions 21-31 (RGAGSGLGKTA) are enriched in gly residues.

Belongs to the universal ribosomal protein uL15 family. As to quaternary structure, part of the 50S ribosomal subunit.

Its function is as follows. Binds to the 23S rRNA. The sequence is that of Large ribosomal subunit protein uL15 from Halorhodospira halophila (strain DSM 244 / SL1) (Ectothiorhodospira halophila (strain DSM 244 / SL1)).